The primary structure comprises 103 residues: Signal recognition particle 19 kDa protein (103 aa).

It belongs to the SRP19 family. Part of the signal recognition particle protein translocation system, which is composed of SRP and FtsY. Archaeal SRP consists of a 7S RNA molecule of 300 nucleotides and two protein subunits: SRP54 and SRP19.

It is found in the cytoplasm. Functionally, involved in targeting and insertion of nascent membrane proteins into the cytoplasmic membrane. Binds directly to 7S RNA and mediates binding of the 54 kDa subunit of the SRP. The sequence is that of Signal recognition particle 19 kDa protein from Hyperthermus butylicus (strain DSM 5456 / JCM 9403 / PLM1-5).